Consider the following 72-residue polypeptide: Translation initiation factor IF-1 (72 aa).

Residues 1–72 (MAKEDVIEFS…TKGRITFRYK (72 aa)) form the S1-like domain.

This sequence belongs to the IF-1 family. As to quaternary structure, component of the 30S ribosomal translation pre-initiation complex which assembles on the 30S ribosome in the order IF-2 and IF-3, IF-1 and N-formylmethionyl-tRNA(fMet); mRNA recruitment can occur at any time during PIC assembly.

The protein resides in the cytoplasm. Functionally, one of the essential components for the initiation of protein synthesis. Stabilizes the binding of IF-2 and IF-3 on the 30S subunit to which N-formylmethionyl-tRNA(fMet) subsequently binds. Helps modulate mRNA selection, yielding the 30S pre-initiation complex (PIC). Upon addition of the 50S ribosomal subunit IF-1, IF-2 and IF-3 are released leaving the mature 70S translation initiation complex. The polypeptide is Translation initiation factor IF-1 (Paramagnetospirillum magneticum (strain ATCC 700264 / AMB-1) (Magnetospirillum magneticum)).